We begin with the raw amino-acid sequence, 226 residues long: Glycerol-3-phosphate acyltransferase (226 aa).

6 consecutive transmembrane segments (helical) span residues 1–21 (MGFWLSLCGAVVLVAYLLGSF), 60–80 (FVLGLDCLKGVLAIALVYYLF), 102–122 (LVTLAGIAAILGHSKSIFLGF), 134–154 (ILLAMNWQVGLATFGVFAVVV), 159–178 (IVSLSSIMGAIAVSIVMVFL), and 182–197 (LPYILFGIAGGLYVIL).

Belongs to the PlsY family. Probably interacts with PlsX.

It is found in the cell inner membrane. It catalyses the reaction an acyl phosphate + sn-glycerol 3-phosphate = a 1-acyl-sn-glycero-3-phosphate + phosphate. It participates in lipid metabolism; phospholipid metabolism. Catalyzes the transfer of an acyl group from acyl-phosphate (acyl-PO(4)) to glycerol-3-phosphate (G3P) to form lysophosphatidic acid (LPA). This enzyme utilizes acyl-phosphate as fatty acyl donor, but not acyl-CoA or acyl-ACP. The polypeptide is Glycerol-3-phosphate acyltransferase (Nostoc sp. (strain PCC 7120 / SAG 25.82 / UTEX 2576)).